Reading from the N-terminus, the 312-residue chain is Aspartate carbamoyltransferase catalytic subunit (312 aa).

Positions 58 and 59 each coordinate carbamoyl phosphate. Lysine 86 is a binding site for L-aspartate. Residues arginine 108, histidine 136, and glutamine 139 each contribute to the carbamoyl phosphate site. Residues arginine 169 and arginine 223 each contribute to the L-aspartate site. 2 residues coordinate carbamoyl phosphate: glycine 264 and proline 265.

This sequence belongs to the aspartate/ornithine carbamoyltransferase superfamily. ATCase family. Heterododecamer (2C3:3R2) of six catalytic PyrB chains organized as two trimers (C3), and six regulatory PyrI chains organized as three dimers (R2).

The catalysed reaction is carbamoyl phosphate + L-aspartate = N-carbamoyl-L-aspartate + phosphate + H(+). It functions in the pathway pyrimidine metabolism; UMP biosynthesis via de novo pathway; (S)-dihydroorotate from bicarbonate: step 2/3. In terms of biological role, catalyzes the condensation of carbamoyl phosphate and aspartate to form carbamoyl aspartate and inorganic phosphate, the committed step in the de novo pyrimidine nucleotide biosynthesis pathway. The chain is Aspartate carbamoyltransferase catalytic subunit from Desulforapulum autotrophicum (strain ATCC 43914 / DSM 3382 / VKM B-1955 / HRM2) (Desulfobacterium autotrophicum).